We begin with the raw amino-acid sequence, 158 residues long: SsrA-binding protein (158 aa).

The segment covering 133–147 has biased composition (basic and acidic residues); that stretch reads KRQALRERQDNREAQ. Positions 133–158 are disordered; the sequence is KRQALRERQDNREAQRAMASRKHLGE.

This sequence belongs to the SmpB family.

Its subcellular location is the cytoplasm. In terms of biological role, required for rescue of stalled ribosomes mediated by trans-translation. Binds to transfer-messenger RNA (tmRNA), required for stable association of tmRNA with ribosomes. tmRNA and SmpB together mimic tRNA shape, replacing the anticodon stem-loop with SmpB. tmRNA is encoded by the ssrA gene; the 2 termini fold to resemble tRNA(Ala) and it encodes a 'tag peptide', a short internal open reading frame. During trans-translation Ala-aminoacylated tmRNA acts like a tRNA, entering the A-site of stalled ribosomes, displacing the stalled mRNA. The ribosome then switches to translate the ORF on the tmRNA; the nascent peptide is terminated with the 'tag peptide' encoded by the tmRNA and targeted for degradation. The ribosome is freed to recommence translation, which seems to be the essential function of trans-translation. The protein is SsrA-binding protein of Leifsonia xyli subsp. xyli (strain CTCB07).